Reading from the N-terminus, the 198-residue chain is Protein GrpE (198 aa).

The protein belongs to the GrpE family. In terms of assembly, homodimer.

The protein resides in the cytoplasm. Participates actively in the response to hyperosmotic and heat shock by preventing the aggregation of stress-denatured proteins, in association with DnaK and GrpE. It is the nucleotide exchange factor for DnaK and may function as a thermosensor. Unfolded proteins bind initially to DnaJ; upon interaction with the DnaJ-bound protein, DnaK hydrolyzes its bound ATP, resulting in the formation of a stable complex. GrpE releases ADP from DnaK; ATP binding to DnaK triggers the release of the substrate protein, thus completing the reaction cycle. Several rounds of ATP-dependent interactions between DnaJ, DnaK and GrpE are required for fully efficient folding. The protein is Protein GrpE of Actinobacillus pleuropneumoniae serotype 5b (strain L20).